Reading from the N-terminus, the 160-residue chain is Large ribosomal subunit protein uL11 (160 aa).

It belongs to the universal ribosomal protein uL11 family. In terms of assembly, part of the ribosomal stalk of the 50S ribosomal subunit. Interacts with L10 and the large rRNA to form the base of the stalk. L10 forms an elongated spine to which L12 dimers bind in a sequential fashion forming a multimeric L10(L12)X complex.

Its function is as follows. Forms part of the ribosomal stalk which helps the ribosome interact with GTP-bound translation factors. The chain is Large ribosomal subunit protein uL11 from Nanoarchaeum equitans (strain Kin4-M).